We begin with the raw amino-acid sequence, 209 residues long: Fibroblast growth factor 21 (209 aa).

A signal peptide spans 1 to 28; it reads MDSDETGFEHSGLWVSVLAGLLLGACQA. The segment at 143–209 is disordered; sequence PLHLPGNKSP…SQGRSPSYAS (67 aa). Residues 168 to 186 show a composition bias toward pro residues; that stretch reads PGLPPALPEPPGILAPQPP.

Belongs to the heparin-binding growth factors family. In terms of assembly, interacts (via C-terminus) with KLB; this interaction is direct. Interacts with FGFR4.

Its subcellular location is the secreted. Functionally, stimulates glucose uptake in differentiated adipocytes via the induction of glucose transporter SLC2A1/GLUT1 expression (but not SLC2A4/GLUT4 expression). Activity requires the presence of KLB. Regulates systemic glucose homeostasis and insulin sensitivity. This is Fibroblast growth factor 21 (FGF21) from Homo sapiens (Human).